The chain runs to 696 residues: DNA topoisomerase 6 subunit B (696 aa).

The segment at 1-36 (MDDDAGDGAASGGTKRKVTAASSSAAAKGKAAGKGK) is disordered. Low complexity predominate over residues 20-36 (AASSSAAAKGKAAGKGK). ATP contacts are provided by residues Asn88, Asp187, 208–209 (TK), 217–224 (GKFGLGAK), and Lys543.

The protein belongs to the TOP6B family. In terms of assembly, homodimer. Heterotetramer of two TOP6A and two TOP6B subunits. Interacts with SPO11-4.

The protein localises to the nucleus. The catalysed reaction is ATP-dependent breakage, passage and rejoining of double-stranded DNA.. Component of the DNA topoisomerase VI involved in chromatin organization and progression of endoreduplication cycles. Relaxes both positive and negative superturns and exhibits a strong decatenase activity. The B subunit binds ATP. In Oryza sativa subsp. japonica (Rice), this protein is DNA topoisomerase 6 subunit B (TOP6B).